Consider the following 354-residue polypeptide: Rhodopsin (354 aa).

Over 1–36 (MNGTEGPNFYIPMSNKTGVVRSPFDYPQYYLAEPWK) the chain is Extracellular. Asn2 carries an N-linked (GlcNAc...) (hybrid) asparagine glycan. An N-linked (GlcNAc...) asparagine glycan is attached at Asn15. The helical transmembrane segment at 37-61 (YSVLAAYMFLLILLGLPINFMTLYV) threads the bilayer. Topologically, residues 62-73 (TIQHKKLRTPLN) are cytoplasmic. Residues 74–96 (YILLNLGVCNHFMVLCGFTITMY) traverse the membrane as a helical segment. Over 97 to 110 (TSLHGYFVFGQTGC) the chain is Extracellular. The cysteines at positions 110 and 187 are disulfide-linked. The chain crosses the membrane as a helical span at residues 111 to 133 (YFEGFFATLGGEIALWSLVVLAI). A 'Ionic lock' involved in activated form stabilization motif is present at residues 134–136 (ERY). Over 134 to 152 (ERYIVVCKPMSNFRFGENH) the chain is Cytoplasmic. A helical membrane pass occupies residues 153–173 (AMMGVAFTWIMALACAVPPLF). Residues 174-202 (GWSRYIPEGMQCSCGVDYYTLKPEVNNES) lie on the Extracellular side of the membrane. Residues 203–224 (FVIYMFVVHFLIPLIIISFCYG) form a helical membrane-spanning segment. Topologically, residues 225–252 (RLVCTVKEAAAQQQESATTQKAEKEVTR) are cytoplasmic. The helical transmembrane segment at 253-274 (MVIIMVIFFLICWVPYAYVAFY) threads the bilayer. Topologically, residues 275–286 (IFTHQGSEFGPI) are extracellular. A helical membrane pass occupies residues 287–308 (FMTVPAFFAKSSAIYNPVIYIM). At Lys296 the chain carries N6-(retinylidene)lysine. Over 309–354 (LNKQFRNCMITTLCCGKNPFGDDDASSAATSKTEATSVSTSQVSPA) the chain is Cytoplasmic. 2 S-palmitoyl cysteine lipidation sites follow: Cys322 and Cys323. The disordered stretch occupies residues 332 to 354 (DASSAATSKTEATSVSTSQVSPA). A compositionally biased stretch (low complexity) spans 334–354 (SSAATSKTEATSVSTSQVSPA).

This sequence belongs to the G-protein coupled receptor 1 family. Opsin subfamily. Contains one covalently linked retinal chromophore. Upon light absorption, the covalently bound 11-cis-retinal is converted to all-trans-retinal. After hydrolysis of the Schiff base and release of the covalently bound all-trans-retinal, active rhodopsin is regenerated by binding of a fresh molecule of 11-cis-retinal. In terms of tissue distribution, detected in retina rod photoreceptor cell outer segments (at protein level). Detected in retina.

Its subcellular location is the membrane. It is found in the cell projection. It localises to the cilium. The protein localises to the photoreceptor outer segment. Its function is as follows. Photoreceptor required for image-forming vision at low light intensity. Required for photoreceptor cell viability after birth. Light-induced isomerization of 11-cis to all-trans retinal triggers a conformational change that activates signaling via G-proteins. Subsequent receptor phosphorylation mediates displacement of the bound G-protein alpha subunit by arrestin and terminates signaling. This Lithobates pipiens (Northern leopard frog) protein is Rhodopsin (RHO).